Reading from the N-terminus, the 465-residue chain is Methionine aminopeptidase 2-2 (465 aa).

Residues 1–11 (MGSKTPHNHRR) show a composition bias toward basic residues. Residues 1–89 (MGSKTPHNHR…KKKKNTKELE (89 aa)) form a disordered region. Positions 43–54 (GESEGGEDEDDD) are enriched in acidic residues. Basic residues predominate over residues 73-84 (RNKRKKKKKKKN). A substrate-binding site is contributed by His-217. Asp-238, Asp-249, and His-318 together coordinate a divalent metal cation. His-326 is a substrate binding site. Glu-351 and Glu-446 together coordinate a divalent metal cation.

The protein belongs to the peptidase M24A family. Methionine aminopeptidase eukaryotic type 2 subfamily. It depends on Co(2+) as a cofactor. The cofactor is Zn(2+). Requires Mn(2+) as cofactor. Fe(2+) serves as cofactor.

The protein localises to the cytoplasm. The catalysed reaction is Release of N-terminal amino acids, preferentially methionine, from peptides and arylamides.. Its function is as follows. Cotranslationally removes the N-terminal methionine from nascent proteins. The N-terminal methionine is often cleaved when the second residue in the primary sequence is small and uncharged (Met-Ala-, Cys, Gly, Pro, Ser, Thr, or Val). The protein is Methionine aminopeptidase 2-2 of Ajellomyces capsulatus (strain G186AR / H82 / ATCC MYA-2454 / RMSCC 2432) (Darling's disease fungus).